The primary structure comprises 347 residues: Quinolinate synthase (347 aa).

Residues His-47 and Ser-68 each coordinate iminosuccinate. Residue Cys-113 coordinates [4Fe-4S] cluster. Residues 139–141 (YAN) and Ser-156 contribute to the iminosuccinate site. Cys-200 is a [4Fe-4S] cluster binding site. Residues 226-228 (HPE) and Thr-243 contribute to the iminosuccinate site. Cys-297 is a [4Fe-4S] cluster binding site.

The protein belongs to the quinolinate synthase family. Type 1 subfamily. [4Fe-4S] cluster serves as cofactor.

It is found in the cytoplasm. The enzyme catalyses iminosuccinate + dihydroxyacetone phosphate = quinolinate + phosphate + 2 H2O + H(+). The protein operates within cofactor biosynthesis; NAD(+) biosynthesis; quinolinate from iminoaspartate: step 1/1. Its function is as follows. Catalyzes the condensation of iminoaspartate with dihydroxyacetone phosphate to form quinolinate. The sequence is that of Quinolinate synthase from Shigella flexneri serotype 5b (strain 8401).